Consider the following 34-residue polypeptide: Photosystem II reaction center protein M (34 aa).

The helical transmembrane segment at 5 to 25 (ILAFIATALFILVPTAFLLII) threads the bilayer.

This sequence belongs to the PsbM family. In terms of assembly, PSII is composed of 1 copy each of membrane proteins PsbA, PsbB, PsbC, PsbD, PsbE, PsbF, PsbH, PsbI, PsbJ, PsbK, PsbL, PsbM, PsbT, PsbX, PsbY, PsbZ, Psb30/Ycf12, at least 3 peripheral proteins of the oxygen-evolving complex and a large number of cofactors. It forms dimeric complexes.

It is found in the plastid. Its subcellular location is the chloroplast thylakoid membrane. Its function is as follows. One of the components of the core complex of photosystem II (PSII). PSII is a light-driven water:plastoquinone oxidoreductase that uses light energy to abstract electrons from H(2)O, generating O(2) and a proton gradient subsequently used for ATP formation. It consists of a core antenna complex that captures photons, and an electron transfer chain that converts photonic excitation into a charge separation. This subunit is found at the monomer-monomer interface. In Buxus microphylla (Littleleaf boxwood), this protein is Photosystem II reaction center protein M.